The sequence spans 702 residues: Polyribonucleotide nucleotidyltransferase (702 aa).

Mg(2+)-binding residues include Asp493 and Asp499. One can recognise a KH domain in the interval Pro559–Ile619. The S1 motif domain occupies Gly643–Ala702.

This sequence belongs to the polyribonucleotide nucleotidyltransferase family. Requires Mg(2+) as cofactor.

It localises to the cytoplasm. It carries out the reaction RNA(n+1) + phosphate = RNA(n) + a ribonucleoside 5'-diphosphate. In terms of biological role, involved in mRNA degradation. Catalyzes the phosphorolysis of single-stranded polyribonucleotides processively in the 3'- to 5'-direction. The chain is Polyribonucleotide nucleotidyltransferase from Campylobacter lari (strain RM2100 / D67 / ATCC BAA-1060).